A 766-amino-acid polypeptide reads, in one-letter code: Coenzyme PQQ synthesis protein F (766 aa).

H49 serves as a coordination point for Zn(2+). E52 serves as the catalytic Proton acceptor. Residues H53 and E130 each coordinate Zn(2+).

Belongs to the peptidase M16 family. Requires Zn(2+) as cofactor.

The protein operates within cofactor biosynthesis; pyrroloquinoline quinone biosynthesis. Functionally, required for coenzyme pyrroloquinoline quinone (PQQ) biosynthesis. It is thought that this protein is a protease that cleaves peptides bond in a small peptide (gene pqqA), providing the glutamate and tyrosine residues which are necessary for the synthesis of PQQ. The protein is Coenzyme PQQ synthesis protein F (pqqF) of Pseudomonas putida (strain ATCC 47054 / DSM 6125 / CFBP 8728 / NCIMB 11950 / KT2440).